We begin with the raw amino-acid sequence, 614 residues long: Zinc finger and SCAN domain-containing protein 2 (614 aa).

2 disordered regions span residues 1–26 and 43–76; these read MMAADIPRVTTPLSSLVQVPQEEDRQ and EAVLQEDGPESEPFPQSAGKGGPQEEVTRGPQGA. In terms of domain architecture, SCAN box spans 59–132; the sequence is SAGKGGPQEE…ALVEDLTQTL (74 aa). C2H2-type zinc fingers lie at residues 222-244, 250-272, 278-300, 306-328, 334-356, 362-384, 390-412, 418-440, 446-468, 474-496, 502-524, 530-552, 558-580, and 586-608; these read YECPQCGKTFSRKSHLITHERTH, YKCDECGKSFSDGSNFSRHQTTH, YKCRDCGKSFSRSANLITHQRIH, FQCAECGKSFSRSPNLIAHQRTH, YSCPECGKSFGNRSSLNTHQGIH, YECKECGESFSYNSNLIRHQRIH, YKCTDCGQRFSQSSALITHRRTH, YQCSECGKSFSRSSNLATHRRTH, YKCGVCGKSFSQSSSLIAHQGMH, YECLTCGESFSWSSNLLKHQRIH, YKCSECGKCFSQRSQLVVHQRTH, YKCLMCGKSFSRGSILVMHQRAH, YRCPECGKGFSWNSVLIIHQRIH, and YKCPECGKGFSNSSNFITHQRTH.

The protein belongs to the krueppel C2H2-type zinc-finger protein family.

The protein localises to the nucleus. Its function is as follows. May be involved in transcriptional regulation during the post-meiotic stages of spermatogenesis. The polypeptide is Zinc finger and SCAN domain-containing protein 2 (ZSCAN2) (Homo sapiens (Human)).